A 500-amino-acid chain; its full sequence is Pyridine nucleotide-disulfide oxidoreductase domain-containing protein 1 (500 aa).

Met1 carries the N-acetylmethionine modification.

This sequence belongs to the class-I pyridine nucleotide-disulfide oxidoreductase family. PYROXD1 subfamily. FAD is required as a cofactor.

It localises to the nucleus. The protein resides in the cytoplasm. It is found in the myofibril. Its subcellular location is the sarcomere. Its function is as follows. Probable FAD-dependent oxidoreductase; involved in the cellular oxidative stress response. Required for normal sarcomere structure and muscle fiber integrity. The sequence is that of Pyridine nucleotide-disulfide oxidoreductase domain-containing protein 1 (PYROXD1) from Pongo abelii (Sumatran orangutan).